We begin with the raw amino-acid sequence, 247 residues long: Nodulation protein H (247 aa).

The interval 1 to 16 is hydrophobic; sequence MTHSTLPPRPFAILAM.

Its function is as follows. Required for the formation of sulfated nod factor. Proposed to transfer activated sulfate (PAPS) to a N-acetylglucosamine of the nod factor. The sequence is that of Nodulation protein H (nodH) from Rhizobium meliloti (Ensifer meliloti).